Consider the following 404-residue polypeptide: Tryptophan synthase beta chain (404 aa).

Lys98 is modified (N6-(pyridoxal phosphate)lysine).

Belongs to the TrpB family. As to quaternary structure, tetramer of two alpha and two beta chains. Pyridoxal 5'-phosphate serves as cofactor.

The enzyme catalyses (1S,2R)-1-C-(indol-3-yl)glycerol 3-phosphate + L-serine = D-glyceraldehyde 3-phosphate + L-tryptophan + H2O. Its pathway is amino-acid biosynthesis; L-tryptophan biosynthesis; L-tryptophan from chorismate: step 5/5. Functionally, the beta subunit is responsible for the synthesis of L-tryptophan from indole and L-serine. The protein is Tryptophan synthase beta chain of Rhodopseudomonas palustris (strain ATCC BAA-98 / CGA009).